The chain runs to 223 residues: Twisted gastrulation protein homolog 1 (223 aa).

The N-terminal stretch at 1–25 (MKLHYVAVLTLAILMFLTWLPASLS) is a signal peptide. N-linked (GlcNAc...) asparagine glycans are attached at residues Asn52 and Asn81.

This sequence belongs to the twisted gastrulation protein family. In terms of assembly, interacts with CHRD and BMP4. This interaction enhances CHRD/BMP4 complex formation. Interacts with BMP7.

Its subcellular location is the secreted. Its function is as follows. May be involved in dorsoventral axis formation. Seems to antagonize BMP signaling by forming ternary complexes with CHRD and BMPs, thereby preventing BMPs from binding to their receptors. In addition to the anti-BMP function, also has pro-BMP activity, partly mediated by cleavage and degradation of CHRD, which releases BMPs from ternary complexes. May be an important modulator of BMP-regulated cartilage development and chondrocyte differentiation. May play a role in thymocyte development. This is Twisted gastrulation protein homolog 1 (TWSG1) from Pongo abelii (Sumatran orangutan).